We begin with the raw amino-acid sequence, 96 residues long: Small ribosomal subunit protein bS6 (96 aa).

It belongs to the bacterial ribosomal protein bS6 family.

In terms of biological role, binds together with bS18 to 16S ribosomal RNA. The chain is Small ribosomal subunit protein bS6 from Bacillus cereus (strain ATCC 10987 / NRS 248).